A 329-amino-acid chain; its full sequence is Probable endo-beta-1,4-glucanase B (329 aa).

An N-terminal signal peptide occupies residues 1-18 (MKFGSIVLIAAAAGSAVA). N-linked (GlcNAc...) asparagine glycosylation is found at N33 and N96. E156 functions as the Proton donor in the catalytic mechanism. Catalysis depends on E263, which acts as the Nucleophile.

The protein belongs to the glycosyl hydrolase 5 (cellulase A) family.

The protein localises to the secreted. It catalyses the reaction Endohydrolysis of (1-&gt;4)-beta-D-glucosidic linkages in cellulose, lichenin and cereal beta-D-glucans.. Its function is as follows. Has endoglucanase activity on substrates containing beta-1,4 glycosidic bonds, like in carboxymethylcellulose (CMC), hydroxyethylcellulose (HEC) and beta-glucan. Involved in the degradation of complex natural cellulosic substrates. The chain is Probable endo-beta-1,4-glucanase B (eglB) from Neosartorya fischeri (strain ATCC 1020 / DSM 3700 / CBS 544.65 / FGSC A1164 / JCM 1740 / NRRL 181 / WB 181) (Aspergillus fischerianus).